Consider the following 219-residue polypeptide: Vesicle-associated membrane protein 711 (219 aa).

A2 is modified (N-acetylalanine). Residues 2 to 189 (AILYALVARG…RSNVWWRNCK (188 aa)) lie on the Cytoplasmic side of the membrane. The Longin domain maps to 7-111 (LVARGTVVLS…AMNEEFSRVL (105 aa)). Residues 126–186 (RINRIKGEMN…RRFRSNVWWR (61 aa)) form the v-SNARE coiled-coil homology domain. The chain crosses the membrane as a helical; Anchor for type IV membrane protein span at residues 190 to 210 (LTVLLILLLLVIIYIAVAFLC). Over 211 to 219 (HGPTLPSCI) the chain is Vesicular.

The protein belongs to the synaptobrevin family. Expressed in flowers, leaves, stems and roots.

The protein resides in the vacuole membrane. It localises to the prevacuolar compartment membrane. Involved in the targeting and/or fusion of transport vesicles to their target membrane. This chain is Vesicle-associated membrane protein 711, found in Arabidopsis thaliana (Mouse-ear cress).